The following is a 623-amino-acid chain: Chaperone protein HtpG (623 aa).

Positions 1–326 (MAEEKRQFQA…SQDLPLNVSR (326 aa)) are a; substrate-binding. The interval 327-543 (EMLQHNPVLS…EGEMSMHLEK (217 aa)) is b. The interval 544 to 623 (MLRAHNQAPG…VSVMEKGLLG (80 aa)) is c.

It belongs to the heat shock protein 90 family. In terms of assembly, homodimer.

The protein localises to the cytoplasm. In terms of biological role, molecular chaperone. Has ATPase activity. In Paramagnetospirillum magneticum (strain ATCC 700264 / AMB-1) (Magnetospirillum magneticum), this protein is Chaperone protein HtpG.